We begin with the raw amino-acid sequence, 361 residues long: UDP-3-O-acylglucosamine N-acyltransferase (361 aa).

The Proton acceptor role is filled by histidine 253.

Belongs to the transferase hexapeptide repeat family. LpxD subfamily. In terms of assembly, homotrimer.

It carries out the reaction a UDP-3-O-[(3R)-3-hydroxyacyl]-alpha-D-glucosamine + a (3R)-hydroxyacyl-[ACP] = a UDP-2-N,3-O-bis[(3R)-3-hydroxyacyl]-alpha-D-glucosamine + holo-[ACP] + H(+). Its pathway is bacterial outer membrane biogenesis; LPS lipid A biosynthesis. In terms of biological role, catalyzes the N-acylation of UDP-3-O-acylglucosamine using 3-hydroxyacyl-ACP as the acyl donor. Is involved in the biosynthesis of lipid A, a phosphorylated glycolipid that anchors the lipopolysaccharide to the outer membrane of the cell. This is UDP-3-O-acylglucosamine N-acyltransferase from Burkholderia pseudomallei (strain 668).